Reading from the N-terminus, the 146-residue chain is Hemoglobin subunit beta (146 aa).

Val-1 carries the post-translational modification N-acetylvaline. In terms of domain architecture, Globin spans 2-146 (HLSGEEKTAL…VANALAHKYH (145 aa)). The residue at position 44 (Ser-44) is a Phosphoserine. Lys-59 is modified (N6-acetyllysine). His-63 provides a ligand contact to heme b. The residue at position 82 (Lys-82) is an N6-acetyllysine. Heme b is bound at residue His-92. Cys-93 carries the post-translational modification S-nitrosocysteine. Residue Lys-144 is modified to N6-acetyllysine.

Belongs to the globin family. As to quaternary structure, heterotetramer of two alpha chains and two beta chains. As to expression, red blood cells.

Its function is as follows. Involved in oxygen transport from the lung to the various peripheral tissues. This Tamiasciurus hudsonicus (American red squirrel) protein is Hemoglobin subunit beta.